A 613-amino-acid chain; its full sequence is pH-response transcription factor pacC/RIM101 (613 aa).

The segment at 1-61 (MSPSAPEQKP…SSTAPSTSSD (61 aa)) is disordered. A compositionally biased stretch (low complexity) spans 11 to 60 (QLQQQQQQQQQGSSSGDSSSGSVNDSKSVTPAPSATSSTSQSSTAPSTSS). 3 consecutive C2H2-type zinc fingers follow at residues 64–89 (LICR…CERH), 100–124 (LTCQ…IRVH), and 130–152 (HKCE…VKTH). Residues 146-157 (KKHVKTHADDSV) show a composition bias toward basic and acidic residues. Disordered regions lie at residues 146–186 (KKHV…YDHT), 371–391 (NTPS…GADG), 406–535 (AISS…ATRE), and 565–613 (EFVE…MPGA). The span at 417 to 441 (PPSSSMSYTSGHSPSPSSSAMSPQS) shows a compositional bias: low complexity. Composition is skewed to polar residues over residues 442-460 (RHGS…SLPA) and 506-517 (SGASTPKASESA). Positions 451 to 454 (YPTL) match the YPX[LI] motif 1 motif. The short motif at 605 to 608 (YPIL) is the YPX[LI] motif 2 element.

This sequence belongs to the pacC/RIM101 family. In terms of assembly, binds to DNA. Activated by C-terminal proteolytic cleavage by signaling protease (probably palB/RIM13) at neutral to alkaline ambient pH.

It is found in the cytoplasm. Its subcellular location is the nucleus. In terms of biological role, transcription factor that mediates regulation of both acid- and alkaline-expressed genes in response to ambient pH. At alkaline ambient pH, activates transcription of alkaline-expressed genes (including PAC1 itself) and represses transcription of acid-expressed genes. The chain is pH-response transcription factor pacC/RIM101 (PAC1) from Gibberella moniliformis (Maize ear and stalk rot fungus).